Here is a 250-residue protein sequence, read N- to C-terminus: Flap endonuclease Xni (250 aa).

Aspartate 104 contributes to the Mg(2+) binding site. One can recognise a 5'-3' exonuclease domain in the interval 160–249 (VQPQQLTDFW…LQGNLQQLRL (90 aa)). Residues leucine 171, alanine 172, proline 180, valine 182, and isoleucine 185 each contribute to the K(+) site. The segment at 184 to 189 (GIGPKS) is interaction with DNA.

The protein belongs to the Xni family. Mg(2+) is required as a cofactor. The cofactor is K(+).

Has flap endonuclease activity. During DNA replication, flap endonucleases cleave the 5'-overhanging flap structure that is generated by displacement synthesis when DNA polymerase encounters the 5'-end of a downstream Okazaki fragment. The sequence is that of Flap endonuclease Xni from Sodalis glossinidius (strain morsitans).